A 304-amino-acid chain; its full sequence is Pseudouridine-5'-phosphate glycosidase (304 aa).

The Proton donor role is filled by E25. Positions 86 and 106 each coordinate substrate. D138 serves as a coordination point for Mn(2+). Residue 140–142 participates in substrate binding; it reads SAD. The Nucleophile role is filled by K159.

The protein belongs to the pseudouridine-5'-phosphate glycosidase family. As to quaternary structure, homotrimer. The cofactor is Mn(2+).

It catalyses the reaction D-ribose 5-phosphate + uracil = psi-UMP + H2O. Catalyzes the reversible cleavage of pseudouridine 5'-phosphate (PsiMP) to ribose 5-phosphate and uracil. Functions biologically in the cleavage direction, as part of a pseudouridine degradation pathway. The protein is Pseudouridine-5'-phosphate glycosidase of Lysinibacillus sphaericus (strain C3-41).